Consider the following 125-residue polypeptide: Large ribosomal subunit protein bL20 (125 aa).

It belongs to the bacterial ribosomal protein bL20 family.

In terms of biological role, binds directly to 23S ribosomal RNA and is necessary for the in vitro assembly process of the 50S ribosomal subunit. It is not involved in the protein synthesizing functions of that subunit. This Methylobacterium radiotolerans (strain ATCC 27329 / DSM 1819 / JCM 2831 / NBRC 15690 / NCIMB 10815 / 0-1) protein is Large ribosomal subunit protein bL20.